The sequence spans 417 residues: Serine hydroxymethyltransferase 1 (417 aa).

(6S)-5,6,7,8-tetrahydrofolate is bound by residues Leu-121 and 125–127; that span reads GHL. N6-(pyridoxal phosphate)lysine is present on Lys-229. 354-356 contributes to the (6S)-5,6,7,8-tetrahydrofolate binding site; that stretch reads SPF.

Belongs to the SHMT family. Homodimer. The cofactor is pyridoxal 5'-phosphate.

It is found in the cytoplasm. The catalysed reaction is (6R)-5,10-methylene-5,6,7,8-tetrahydrofolate + glycine + H2O = (6S)-5,6,7,8-tetrahydrofolate + L-serine. Its pathway is one-carbon metabolism; tetrahydrofolate interconversion. It participates in amino-acid biosynthesis; glycine biosynthesis; glycine from L-serine: step 1/1. Catalyzes the reversible interconversion of serine and glycine with tetrahydrofolate (THF) serving as the one-carbon carrier. This reaction serves as the major source of one-carbon groups required for the biosynthesis of purines, thymidylate, methionine, and other important biomolecules. Also exhibits THF-independent aldolase activity toward beta-hydroxyamino acids, producing glycine and aldehydes, via a retro-aldol mechanism. The polypeptide is Serine hydroxymethyltransferase 1 (Pseudomonas fluorescens (strain ATCC BAA-477 / NRRL B-23932 / Pf-5)).